Consider the following 325-residue polypeptide: NADH-quinone oxidoreductase subunit H (325 aa).

8 consecutive transmembrane segments (helical) span residues 11–31 (ILIS…CGAF), 81–101 (AIFT…FAIV), 114–134 (IGIL…LFAG), 154–174 (LSYE…AGSF), 186–206 (VWNV…GVAV), 237–257 (FFVG…TLFF), 265–285 (LPPF…FILI), and 304–324 (VCLP…LYNA).

It belongs to the complex I subunit 1 family. NDH-1 is composed of 13 different subunits. Subunits NuoA, H, J, K, L, M, N constitute the membrane sector of the complex.

The protein localises to the cell inner membrane. The enzyme catalyses a quinone + NADH + 5 H(+)(in) = a quinol + NAD(+) + 4 H(+)(out). NDH-1 shuttles electrons from NADH, via FMN and iron-sulfur (Fe-S) centers, to quinones in the respiratory chain. The immediate electron acceptor for the enzyme in this species is believed to be ubiquinone. Couples the redox reaction to proton translocation (for every two electrons transferred, four hydrogen ions are translocated across the cytoplasmic membrane), and thus conserves the redox energy in a proton gradient. This subunit may bind ubiquinone. This chain is NADH-quinone oxidoreductase subunit H, found in Yersinia enterocolitica serotype O:8 / biotype 1B (strain NCTC 13174 / 8081).